A 227-amino-acid polypeptide reads, in one-letter code: Isopentenyl-diphosphate Delta-isomerase 1 (227 aa).

Position 36 (K36) interacts with substrate. Mg(2+)-binding residues include H40 and H51. One can recognise a Nudix hydrolase domain in the interval L49–I199. Substrate is bound by residues R70 and K74. C86 is a catalytic residue. S87 lines the substrate pocket. Residues E146 and E148 each coordinate Mg(2+). Residue E148 is part of the active site. Position 176 is an N6-acetyllysine (K176). The short motif at H225–L227 is the Microbody targeting signal element.

It belongs to the IPP isomerase type 1 family. Monomer. It depends on Mg(2+) as a cofactor.

The protein resides in the peroxisome. It carries out the reaction isopentenyl diphosphate = dimethylallyl diphosphate. The protein operates within isoprenoid biosynthesis; dimethylallyl diphosphate biosynthesis; dimethylallyl diphosphate from isopentenyl diphosphate: step 1/1. In terms of biological role, catalyzes the 1,3-allylic rearrangement of the homoallylic substrate isopentenyl (IPP) to its highly electrophilic allylic isomer, dimethylallyl diphosphate (DMAPP). This chain is Isopentenyl-diphosphate Delta-isomerase 1 (Idi1), found in Mus musculus (Mouse).